A 287-amino-acid chain; its full sequence is ATP synthase gamma chain (287 aa).

This sequence belongs to the ATPase gamma chain family. In terms of assembly, F-type ATPases have 2 components, CF(1) - the catalytic core - and CF(0) - the membrane proton channel. CF(1) has five subunits: alpha(3), beta(3), gamma(1), delta(1), epsilon(1). CF(0) has three main subunits: a, b and c.

It localises to the cell inner membrane. Its function is as follows. Produces ATP from ADP in the presence of a proton gradient across the membrane. The gamma chain is believed to be important in regulating ATPase activity and the flow of protons through the CF(0) complex. This Citrobacter koseri (strain ATCC BAA-895 / CDC 4225-83 / SGSC4696) protein is ATP synthase gamma chain.